The sequence spans 709 residues: ATP-binding cassette sub-family F member 3 (709 aa).

Ala2 carries the N-acetylalanine modification. Ser83 is modified (phosphoserine). A compositionally biased stretch (basic and acidic residues) spans 129 to 143; the sequence is RLKAKQEKRSEKETL. The tract at residues 129–171 is disordered; that stretch reads RLKAKQEKRSEKETLKTSNPLVLEEASASQAGSRKESRLESSG. Phosphoserine occurs at positions 155, 157, and 161. Positions 161-171 are enriched in basic and acidic residues; the sequence is SRKESRLESSG. ABC transporter domains follow at residues 178–424 and 492–707; these read VRIE…LNQQ and LQLD…RREG. 210–217 serves as a coordination point for ATP; sequence GRNGLGKT. Residue Ser283 is modified to Phosphoserine. 525 to 532 serves as a coordination point for ATP; it reads GENGAGKS.

Belongs to the ABC transporter superfamily. ABCF family. EF3 subfamily.

In terms of biological role, displays an antiviral effect against flaviviruses such as west Nile virus (WNV) in the presence of OAS1B. The sequence is that of ATP-binding cassette sub-family F member 3 (Abcf3) from Mus musculus (Mouse).